The following is a 504-amino-acid chain: MDLSPRNRPLLESSSLDSGGSLSSLDSSVFCSEGEGEPLALGDCLTVNVGGSRFVLSQQALSCFPHTRLGKLAVVVASYRRLGALAAAPSPLELCDDANPVDNEYFFDRSSQAFRYVLHYYRTGRLHVMEQLCALSFLQEIQYWGIDELSIDSCCRDRYFRRKELSETLDFKKDTDDQESQHESEQDFSQGPCPTVRQKLWDILEKPGSSTAARIFGVISIIFVAVSIVNMALMSAELSWLNLQLLEILEYVCISWFTGEFILRFLCVKDRCRFLRKVPNIIDLLAILPFYITLLVESLSGSHTTQELENVGRLVQVLRLLRALRMLKLGRHSTGLRSLGMTITQCYEEVGLLLLFLSVGISIFSTIEYFAEQSIPDTTFTSVPCAWWWATTSMTTVGYGDIRPDTTTGKIVAFMCILSGILVLALPIAIINDRFSACYFTLKLKEAAVRQREALKKLTKNIATDSYISVNLRDVYARSIMEMLRLKGRERASTRSSGGDDFWF.

Disordered regions lie at residues 1 to 22 and 172 to 193; these read MDLSPRNRPLLESSSLDSGGSL and KKDTDDQESQHESEQDFSQGPC. At 1–214 the chain is on the cytoplasmic side; sequence MDLSPRNRPL…EKPGSSTAAR (214 aa). The segment covering 10–22 has biased composition (low complexity); the sequence is LLESSSLDSGGSL. Over residues 172-185 the composition is skewed to basic and acidic residues; the sequence is KKDTDDQESQHESE. A helical membrane pass occupies residues 215 to 235; that stretch reads IFGVISIIFVAVSIVNMALMS. Topologically, residues 236–242 are extracellular; sequence AELSWLN. Residues 243 to 263 traverse the membrane as a helical segment; it reads LQLLEILEYVCISWFTGEFIL. Residues 264–280 lie on the Cytoplasmic side of the membrane; the sequence is RFLCVKDRCRFLRKVPN. Residues 281-301 traverse the membrane as a helical segment; that stretch reads IIDLLAILPFYITLLVESLSG. The Extracellular segment spans residues 302–313; it reads SHTTQELENVGR. A helical; Voltage-sensor membrane pass occupies residues 314-335; that stretch reads LVQVLRLLRALRMLKLGRHSTG. The Cytoplasmic segment spans residues 336-349; the sequence is LRSLGMTITQCYEE. Residues 350-370 traverse the membrane as a helical segment; sequence VGLLLLFLSVGISIFSTIEYF. Residues 396-401 carry the Selectivity filter motif; the sequence is TVGYGD. Residues 411–431 traverse the membrane as a helical segment; sequence IVAFMCILSGILVLALPIAII. The Cytoplasmic portion of the chain corresponds to 432 to 504; that stretch reads NDRFSACYFT…RSSGGDDFWF (73 aa).

The protein belongs to the potassium channel family. V (TC 1.A.1.2) subfamily. Kv8.1/KCNV1 sub-subfamily. As to quaternary structure, heteromultimer with KCNB1 and KCNB2. Interacts with KCNC4 and KCND1. In terms of tissue distribution, detected in brain, throughout layers II, IV and VI of the brain cortex. Detected in cerebellum and hippocampus, in the granule cell layer, Purkinje cell layer, pyramidal cell layer and dentate gyrus. Detected at lower levels in olfactory bulb, amygdala, thalamus, hypothalamus, midbrain and brainstem.

Its subcellular location is the cell membrane. Its function is as follows. Potassium channel subunit that does not form functional channels by itself. Modulates KCNB1 and KCNB2 channel activity by shifting the threshold for inactivation to more negative values and by slowing the rate of inactivation. Can down-regulate the channel activity of KCNB1, KCNB2, KCNC4 and KCND1, possibly by trapping them in intracellular membranes. The protein is Potassium voltage-gated channel subfamily V member 1 (KCNV1) of Mesocricetus auratus (Golden hamster).